Here is a 453-residue protein sequence, read N- to C-terminus: uncharacterized protein (453 aa).

Cysteine 74, cysteine 80, cysteine 83, and cysteine 162 together coordinate [4Fe-4S] cluster. S-adenosyl-L-methionine contacts are provided by glutamine 286, tyrosine 315, glutamate 336, and aspartate 384. The active-site Nucleophile is the cysteine 411.

Belongs to the class I-like SAM-binding methyltransferase superfamily. RNA M5U methyltransferase family.

This is an uncharacterized protein from Staphylococcus aureus (strain MRSA252).